Here is a 288-residue protein sequence, read N- to C-terminus: Ankyrin repeat and SOCS box protein 8 (288 aa).

Ser-17 is modified (phosphoserine). ANK repeat units follow at residues 52-81 (GTLK…EVNA), 85-113 (YNRT…NPNA), 117-146 (NRDT…SVNA), and 150-179 (NNDT…EVRV). An SOCS box domain is found at 235 to 288 (QLCEKLTVLCSAPGTLKTLARYAVRRSLGLQYLPDAVKGLPLPVSLKDYLLLLE).

This sequence belongs to the ankyrin SOCS box (ASB) family. Interacts with TBK1; this interaction promotes TBK1 proteasomal degradation. Phosphorylated by TBK1.

The protein resides in the cytoplasm. Its pathway is protein modification; protein ubiquitination. In terms of biological role, may be a substrate-recognition component of a SCF-like ECS (Elongin-Cullin-SOCS-box protein) E3 ubiquitin-protein ligase complex which mediates the ubiquitination and subsequent proteasomal degradation of target proteins. Inhibits IFN-beta production through the IRF3 signaling pathway by targeting TBK1 via 'Lys-48'-linked ubiquitination, leading to its proteasomal degradation. The protein is Ankyrin repeat and SOCS box protein 8 (Asb8) of Mus musculus (Mouse).